A 175-amino-acid polypeptide reads, in one-letter code: ATP synthase subunit b (175 aa).

The helical transmembrane segment at 18–38 threads the bilayer; that stretch reads VTSWEPFVANLIAFILMVVIL.

Belongs to the ATPase B chain family. F-type ATPases have 2 components, F(1) - the catalytic core - and F(0) - the membrane proton channel. F(1) has five subunits: alpha(3), beta(3), gamma(1), delta(1), epsilon(1). F(0) has three main subunits: a(1), b(2) and c(10-14). The alpha and beta chains form an alternating ring which encloses part of the gamma chain. F(1) is attached to F(0) by a central stalk formed by the gamma and epsilon chains, while a peripheral stalk is formed by the delta and b chains.

Its subcellular location is the cell inner membrane. In terms of biological role, f(1)F(0) ATP synthase produces ATP from ADP in the presence of a proton or sodium gradient. F-type ATPases consist of two structural domains, F(1) containing the extramembraneous catalytic core and F(0) containing the membrane proton channel, linked together by a central stalk and a peripheral stalk. During catalysis, ATP synthesis in the catalytic domain of F(1) is coupled via a rotary mechanism of the central stalk subunits to proton translocation. Functionally, component of the F(0) channel, it forms part of the peripheral stalk, linking F(1) to F(0). This chain is ATP synthase subunit b, found in Akkermansia muciniphila (strain ATCC BAA-835 / DSM 22959 / JCM 33894 / BCRC 81048 / CCUG 64013 / CIP 107961 / Muc).